Consider the following 135-residue polypeptide: MRNTFIVCWQYLRAFALIYLCLLAGNAVSALLPFTIPGSIIGMLVLFTLLASQILPAQWVKPGCHLLIRHMALLFVPIGVGVMNYYDLVSQQFGPIVVSCLISTFIVMLVVGFSTQIMQRERAMAGDRTPPKDNE.

4 helical membrane-spanning segments follow: residues 5 to 25, 30 to 50, 63 to 83, and 93 to 113; these read FIVC…LLAG, ALLP…FTLL, GCHL…VGVM, and FGPI…VVGF.

It belongs to the UPF0299 family.

It is found in the cell inner membrane. The polypeptide is UPF0299 membrane protein PC1_1498 (Pectobacterium carotovorum subsp. carotovorum (strain PC1)).